We begin with the raw amino-acid sequence, 228 residues long: Ion-translocating oxidoreductase complex subunit G (228 aa).

Residues 35–55 traverse the membrane as a helical segment; that stretch reads ALSLGLVCALVAVALLLGNQL. At threonine 197 the chain carries FMN phosphoryl threonine.

Belongs to the RnfG family. As to quaternary structure, the complex is composed of six subunits: RnfA, RnfB, RnfC, RnfD, RnfE and RnfG. FMN serves as cofactor.

The protein localises to the cell inner membrane. In terms of biological role, part of a membrane-bound complex that couples electron transfer with translocation of ions across the membrane. The sequence is that of Ion-translocating oxidoreductase complex subunit G from Stutzerimonas stutzeri (Pseudomonas stutzeri).